We begin with the raw amino-acid sequence, 204 residues long: Holliday junction branch migration complex subunit RuvA (204 aa).

Residues 1 to 64 are domain I; the sequence is MIGRLCGTAE…EDAITLFGFI (64 aa). A domain II region spans residues 65-143; it reads DAAERDWFRL…AMPTGSAFIP (79 aa). The flexible linker stretch occupies residues 144 to 154; that stretch reads TGTAPPVAPPQ. Positions 154–204 are domain III; it reads QGKLADALSALVNLGYRRAEAEAALSAVQAEAGEDAALDELIRGGLRRLAR.

Belongs to the RuvA family. In terms of assembly, homotetramer. Forms an RuvA(8)-RuvB(12)-Holliday junction (HJ) complex. HJ DNA is sandwiched between 2 RuvA tetramers; dsDNA enters through RuvA and exits via RuvB. An RuvB hexamer assembles on each DNA strand where it exits the tetramer. Each RuvB hexamer is contacted by two RuvA subunits (via domain III) on 2 adjacent RuvB subunits; this complex drives branch migration. In the full resolvosome a probable DNA-RuvA(4)-RuvB(12)-RuvC(2) complex forms which resolves the HJ.

Its subcellular location is the cytoplasm. Its function is as follows. The RuvA-RuvB-RuvC complex processes Holliday junction (HJ) DNA during genetic recombination and DNA repair, while the RuvA-RuvB complex plays an important role in the rescue of blocked DNA replication forks via replication fork reversal (RFR). RuvA specifically binds to HJ cruciform DNA, conferring on it an open structure. The RuvB hexamer acts as an ATP-dependent pump, pulling dsDNA into and through the RuvAB complex. HJ branch migration allows RuvC to scan DNA until it finds its consensus sequence, where it cleaves and resolves the cruciform DNA. The protein is Holliday junction branch migration complex subunit RuvA of Acidiphilium cryptum (strain JF-5).